Consider the following 332-residue polypeptide: DNA-directed RNA polymerase subunit alpha (332 aa).

Residues Met1–Asp231 form an alpha N-terminal domain (alpha-NTD) region. The tract at residues Phe252–Arg332 is alpha C-terminal domain (alpha-CTD).

The protein belongs to the RNA polymerase alpha chain family. As to quaternary structure, homodimer. The RNAP catalytic core consists of 2 alpha, 1 beta, 1 beta' and 1 omega subunit. When a sigma factor is associated with the core the holoenzyme is formed, which can initiate transcription.

The enzyme catalyses RNA(n) + a ribonucleoside 5'-triphosphate = RNA(n+1) + diphosphate. Functionally, DNA-dependent RNA polymerase catalyzes the transcription of DNA into RNA using the four ribonucleoside triphosphates as substrates. The polypeptide is DNA-directed RNA polymerase subunit alpha (Delftia acidovorans (strain DSM 14801 / SPH-1)).